We begin with the raw amino-acid sequence, 231 residues long: Ribonuclease HII (231 aa).

The region spanning 23 to 214 is the RNase H type-2 domain; the sequence is GPVAGVDEAG…VAKAHREWAL (192 aa). The a divalent metal cation site is built by Asp-29, Glu-30, and Asp-123.

The protein belongs to the RNase HII family. Mn(2+) is required as a cofactor. Requires Mg(2+) as cofactor.

Its subcellular location is the cytoplasm. The enzyme catalyses Endonucleolytic cleavage to 5'-phosphomonoester.. Functionally, endonuclease that specifically degrades the RNA of RNA-DNA hybrids. This Corynebacterium efficiens (strain DSM 44549 / YS-314 / AJ 12310 / JCM 11189 / NBRC 100395) protein is Ribonuclease HII.